A 405-amino-acid chain; its full sequence is Argininosuccinate synthase (405 aa).

ATP-binding positions include 12 to 20 and Ala-40; that span reads AYSGGLDTS. Residues Tyr-92 and Ser-97 each coordinate L-citrulline. Position 122 (Gly-122) interacts with ATP. L-aspartate is bound by residues Thr-124, Asn-128, and Asp-129. Asn-128 is a binding site for L-citrulline. Residues Arg-132, Ser-181, Ser-190, Glu-266, and Tyr-278 each coordinate L-citrulline.

This sequence belongs to the argininosuccinate synthase family. Type 1 subfamily. As to quaternary structure, homotetramer.

It localises to the cytoplasm. The enzyme catalyses L-citrulline + L-aspartate + ATP = 2-(N(omega)-L-arginino)succinate + AMP + diphosphate + H(+). The protein operates within amino-acid biosynthesis; L-arginine biosynthesis; L-arginine from L-ornithine and carbamoyl phosphate: step 2/3. This Edwardsiella ictaluri (strain 93-146) protein is Argininosuccinate synthase.